A 116-amino-acid chain; its full sequence is Large ribosomal subunit protein uL18 (116 aa).

It belongs to the universal ribosomal protein uL18 family. As to quaternary structure, part of the 50S ribosomal subunit; part of the 5S rRNA/L5/L18/L25 subcomplex. Contacts the 5S and 23S rRNAs.

In terms of biological role, this is one of the proteins that bind and probably mediate the attachment of the 5S RNA into the large ribosomal subunit, where it forms part of the central protuberance. This Teredinibacter turnerae (strain ATCC 39867 / T7901) protein is Large ribosomal subunit protein uL18.